Here is a 256-residue protein sequence, read N- to C-terminus: Trans-aconitate 2-methyltransferase (256 aa).

Belongs to the methyltransferase superfamily. Tam family.

It localises to the cytoplasm. The enzyme catalyses trans-aconitate + S-adenosyl-L-methionine = (E)-3-(methoxycarbonyl)pent-2-enedioate + S-adenosyl-L-homocysteine. Functionally, catalyzes the S-adenosylmethionine monomethyl esterification of trans-aconitate. This chain is Trans-aconitate 2-methyltransferase, found in Rhizobium etli (strain ATCC 51251 / DSM 11541 / JCM 21823 / NBRC 15573 / CFN 42).